We begin with the raw amino-acid sequence, 97 residues long: Citrate lyase acyl carrier protein (97 aa).

Position 14 is an O-(phosphoribosyl dephospho-coenzyme A)serine (Ser14).

Belongs to the CitD family. As to quaternary structure, oligomer with a subunit composition of (alpha,beta,gamma)6.

It localises to the cytoplasm. In terms of biological role, covalent carrier of the coenzyme of citrate lyase. The polypeptide is Citrate lyase acyl carrier protein (Rhodopseudomonas palustris (strain BisA53)).